The following is an 83-amino-acid chain: Exodeoxyribonuclease 7 small subunit (83 aa).

Belongs to the XseB family. Heterooligomer composed of large and small subunits.

The protein localises to the cytoplasm. The enzyme catalyses Exonucleolytic cleavage in either 5'- to 3'- or 3'- to 5'-direction to yield nucleoside 5'-phosphates.. In terms of biological role, bidirectionally degrades single-stranded DNA into large acid-insoluble oligonucleotides, which are then degraded further into small acid-soluble oligonucleotides. This Mesorhizobium japonicum (strain LMG 29417 / CECT 9101 / MAFF 303099) (Mesorhizobium loti (strain MAFF 303099)) protein is Exodeoxyribonuclease 7 small subunit.